Here is a 183-residue protein sequence, read N- to C-terminus: Dermatopontin (183 aa).

Gln-1 bears the Pyrrolidone carboxylic acid mark. Tyr-5 is subject to Sulfotyrosine. 4 tandem repeats follow at residues 8–61 (PYQQ…ACMP), 52–57 (DRQWNY), 62–117 (TPQS…CCRY), and 107–112 (DREWQF). The 2 X 53-55 AA tandem repeats stretch occupies residues 8-117 (PYQQYHDYSD…REWQFYCCRY (110 aa)). Intrachain disulfides connect Cys-32-Cys-59, Cys-72-Cys-114, Cys-88-Cys-115, Cys-121-Cys-178, and Cys-125-Cys-171. A 3 X 6 AA tandem repeats of D-R-[EQ]-W-[NQK]-[FY] region spans residues 52–168 (DRQWNYACMP…AVERDRQWKF (117 aa)). Sulfotyrosine is present on residues Tyr-144, Tyr-146, Tyr-148, and Tyr-149. Residues 163–168 (DRQWKF) form a 2-3 repeat. At Tyr-176 the chain carries Sulfotyrosine.

This sequence belongs to the dermatopontin family. Interacts with TGFB1, DCN and collagen. In terms of processing, sulfated on tyrosine residue(s). Detected in skin, skeletal muscle, heart, lung, articular cartilage, long bone and calvaria. Smaller amounts detected in kidney. Not detected in brain, liver or spleen.

Its subcellular location is the secreted. It localises to the extracellular space. It is found in the extracellular matrix. Seems to mediate adhesion by cell surface integrin binding. May serve as a communication link between the dermal fibroblast cell surface and its extracellular matrix environment. Enhances TGFB1 activity. Inhibits cell proliferation. Accelerates collagen fibril formation, and stabilizes collagen fibrils against low-temperature dissociation. This chain is Dermatopontin (DPT), found in Sus scrofa (Pig).